The primary structure comprises 76 residues: Exodeoxyribonuclease 7 small subunit (76 aa).

This sequence belongs to the XseB family. In terms of assembly, heterooligomer composed of large and small subunits.

The protein resides in the cytoplasm. It catalyses the reaction Exonucleolytic cleavage in either 5'- to 3'- or 3'- to 5'-direction to yield nucleoside 5'-phosphates.. Its function is as follows. Bidirectionally degrades single-stranded DNA into large acid-insoluble oligonucleotides, which are then degraded further into small acid-soluble oligonucleotides. This Gluconacetobacter diazotrophicus (strain ATCC 49037 / DSM 5601 / CCUG 37298 / CIP 103539 / LMG 7603 / PAl5) protein is Exodeoxyribonuclease 7 small subunit.